Consider the following 279-residue polypeptide: CDP-paratose synthase (279 aa).

The active-site Proton acceptor is tyrosine 115.

Belongs to the NAD(P)-dependent epimerase/dehydratase family.

The enzyme catalyses CDP-alpha-D-paratose + NADP(+) = CDP-4-dehydro-3,6-dideoxy-alpha-D-glucose + NADPH + H(+). Its pathway is nucleotide-sugar biosynthesis; CDP-3,6-dideoxy-D-mannose biosynthesis; CDP-3,6-dideoxy-D-mannose from CTP and alpha-D-glucose 1-phosphate: step 4/5. Functionally, catalyzes synthesis of paratose and tyvelose, unusual 3,6-dideoxyhexose sugars that form part of the O-antigen in the lipopolysaccharides of several enteric bacteria. In Salmonella typhi, this protein is CDP-paratose synthase (rfbS).